We begin with the raw amino-acid sequence, 570 residues long: Peptidyl-prolyl cis-trans isomerase FKBP9 (570 aa).

Positions 1-24 (MAFRGWRPPPPPLLLLLLWVTGQA) are cleaved as a signal peptide. 4 PPIase FKBP-type domains span residues 54–142 (GDFV…MDIW), 166–254 (SDFV…LDLH), 278–365 (GDFL…IDFH), and 389–477 (GDYL…LELV). N-linked (GlcNAc...) asparagine glycans are attached at residues Asn-174, Asn-286, Asn-302, and Asn-397. EF-hand domains are found at residues 488-523 (WNGE…QVAS) and 533-568 (DAEL…AKHD). Ca(2+)-binding residues include Asp-501, Asp-503, Asn-505, Glu-507, Glu-512, Asp-546, Asn-548, Asp-550, Lys-552, and Glu-557. A Prevents secretion from ER motif is present at residues 567-570 (HDEL).

In terms of processing, phosphorylated.

Its subcellular location is the endoplasmic reticulum. The catalysed reaction is [protein]-peptidylproline (omega=180) = [protein]-peptidylproline (omega=0). Inhibited by FK506. PPIases accelerate the folding of proteins during protein synthesis. The chain is Peptidyl-prolyl cis-trans isomerase FKBP9 (FKBP9) from Homo sapiens (Human).